We begin with the raw amino-acid sequence, 208 residues long: GTP-binding protein Rho1 (208 aa).

19-26 is a GTP binding site; that stretch reads GDGACGKT. The Effector region signature appears at 41–49; it reads YVPTVFDNY. GTP contacts are provided by residues 66–70 and 124–127; these read DTAGQ and CKAD. Residues 188 to 208 are disordered; the sequence is GKQGKSKPKTKSSKKKKCVVL. Over residues 191 to 208 the composition is skewed to basic residues; that stretch reads GKSKPKTKSSKKKKCVVL. C205 is subject to Cysteine methyl ester. C205 is lipidated: S-geranylgeranyl cysteine. A propeptide spans 206 to 208 (removed in mature form); it reads VVL.

Belongs to the small GTPase superfamily. Rho family.

It localises to the cell membrane. The sequence is that of GTP-binding protein Rho1 (RHO1) from Kluyveromyces lactis (strain ATCC 8585 / CBS 2359 / DSM 70799 / NBRC 1267 / NRRL Y-1140 / WM37) (Yeast).